The chain runs to 383 residues: Dual-specificity RNA methyltransferase RlmN (383 aa).

E93 (proton acceptor) is an active-site residue. Positions E99–D339 constitute a Radical SAM core domain. Residues C106 and C344 are joined by a disulfide bond. Residues C113, C117, and C120 each contribute to the [4Fe-4S] cluster site. S-adenosyl-L-methionine contacts are provided by residues G170–E171, S202, S224–H226, and N301. C344 serves as the catalytic S-methylcysteine intermediate.

It belongs to the radical SAM superfamily. RlmN family. Requires [4Fe-4S] cluster as cofactor.

The protein localises to the cytoplasm. The catalysed reaction is adenosine(2503) in 23S rRNA + 2 reduced [2Fe-2S]-[ferredoxin] + 2 S-adenosyl-L-methionine = 2-methyladenosine(2503) in 23S rRNA + 5'-deoxyadenosine + L-methionine + 2 oxidized [2Fe-2S]-[ferredoxin] + S-adenosyl-L-homocysteine. It catalyses the reaction adenosine(37) in tRNA + 2 reduced [2Fe-2S]-[ferredoxin] + 2 S-adenosyl-L-methionine = 2-methyladenosine(37) in tRNA + 5'-deoxyadenosine + L-methionine + 2 oxidized [2Fe-2S]-[ferredoxin] + S-adenosyl-L-homocysteine. Specifically methylates position 2 of adenine 2503 in 23S rRNA and position 2 of adenine 37 in tRNAs. m2A2503 modification seems to play a crucial role in the proofreading step occurring at the peptidyl transferase center and thus would serve to optimize ribosomal fidelity. The protein is Dual-specificity RNA methyltransferase RlmN of Ralstonia nicotianae (strain ATCC BAA-1114 / GMI1000) (Ralstonia solanacearum).